Reading from the N-terminus, the 1166-residue chain is Tectonin beta-propeller repeat-containing protein 1 (1166 aa).

TECPR repeat units lie at residues 209–240 (LSVW…SLVD), 254–285 (DLIW…SIVE), 301–332 (SVVW…IEMV), and 344–376 (DQVW…KAIV). S386, S388, S391, S413, and S418 each carry phosphoserine. Residues 403-492 (VRGSGTESAP…PAPTPAELPW (90 aa)) are disordered. Positions 407-418 (GTESAPSDTDAS) are enriched in polar residues. Positions 420-436 (EVERQGPERSLPKESLD) are enriched in basic and acidic residues. The span at 437–446 (NSRNLKGSSS) shows a compositional bias: polar residues. The span at 447-456 (KGHESTRNTE) shows a compositional bias: basic and acidic residues. Residues 616 to 722 (KTGALQWWCD…WLTLLSLSCC (107 aa)) form the PH domain. Residues 734–761 (QAIWSVTCKGDIFVSEPSPDLEAHEHLL) form a TECPR 5 repeat. Position 943 is a phosphoserine (S943). TECPR repeat units lie at residues 958–989 (IALW…LHVG), 1003–1034 (YQVW…YHIP), 1049–1080 (TSVY…EHVS), and 1092–1132 (DQVW…DYGI). The segment at 1147-1166 (RAPRNMSRDQEAHGPGPVCC) is disordered.

Belongs to the TECPR1 family. Interacts with ATG5; the interaction is direct. Interacts with WIPI2. Interacts with the ATG5-ATG12 conjugate, the interaction is however mutually exclusive with ATG16, since it does not interact with ATG12-ATG5-ATG16 complex.

Its subcellular location is the cytoplasmic vesicle. The protein localises to the autophagosome membrane. It localises to the lysosome membrane. Functionally, tethering factor involved in autophagy. Involved in autophagosome maturation by promoting the autophagosome fusion with lysosomes: acts by associating with both the ATG5-ATG12 conjugate and phosphatidylinositol-3-phosphate (PtdIns(3)P) present at the surface of autophagosomes. Also involved in selective autophagy against bacterial pathogens, by being required for phagophore/preautophagosomal structure biogenesis and maturation. The chain is Tectonin beta-propeller repeat-containing protein 1 (Tecpr1) from Rattus norvegicus (Rat).